The sequence spans 78 residues: Small ribosomal subunit protein bS16c (78 aa).

This sequence belongs to the bacterial ribosomal protein bS16 family.

It is found in the plastid. Its subcellular location is the chloroplast. This Amborella trichopoda protein is Small ribosomal subunit protein bS16c.